Reading from the N-terminus, the 60-residue chain is UPF0434 protein NMA0874 (60 aa).

It belongs to the UPF0434 family.

This Neisseria meningitidis serogroup A / serotype 4A (strain DSM 15465 / Z2491) protein is UPF0434 protein NMA0874.